Reading from the N-terminus, the 62-residue chain is Large ribosomal subunit protein uL29 (62 aa).

The protein belongs to the universal ribosomal protein uL29 family.

In Geobacter metallireducens (strain ATCC 53774 / DSM 7210 / GS-15), this protein is Large ribosomal subunit protein uL29.